The primary structure comprises 170 residues: Transmembrane protein 217B (170 aa).

Residues 1 to 21 (MNVRMFSLMVGIFSVLNTTQF) form the signal peptide. Residues 22–58 (FIFDLNQKTHICYEAKFSIYVDSKSELVTWTLFHRAN) lie on the Lumenal side of the membrane. The chain crosses the membrane as a helical span at residues 59-79 (ISTGLSLTTIIIGCFLFYCIH). At 80 to 85 (KNIYMG) the chain is on the cytoplasmic side. Residues 86–106 (LLIYAMWIITYELINFSIVLL) form a helical membrane-spanning segment. Residues 107–120 (LNGIIKDHFKTLSY) lie on the Lumenal side of the membrane. The helical transmembrane segment at 121-141 (LHWIFQISHMLLHFFCLPFIV) threads the bilayer. Residues 142–170 (KHAYNLYKESQTVGRKRRHRLCSTIAVNS) are Cytoplasmic-facing.

It is found in the membrane. This is Transmembrane protein 217B from Homo sapiens (Human).